The primary structure comprises 178 residues: Inner membrane-spanning protein YciB (178 aa).

5 helical membrane-spanning segments follow: residues 22–42 (IFYASGALIAATGLAVAMTYF), 50–70 (ASLITFIMVAVFGTLTLAFHS), 72–92 (LFIKWKVTVIYALFALALLGS), 121–141 (MAWALFFTACALANIYVAFWL), and 149–169 (FKVFGLTALTLVFTVLSVVYI).

The protein belongs to the YciB family.

The protein resides in the cell inner membrane. In terms of biological role, plays a role in cell envelope biogenesis, maintenance of cell envelope integrity and membrane homeostasis. In Photorhabdus laumondii subsp. laumondii (strain DSM 15139 / CIP 105565 / TT01) (Photorhabdus luminescens subsp. laumondii), this protein is Inner membrane-spanning protein YciB.